The following is a 396-amino-acid chain: Probable sugar efflux transporter (396 aa).

Transmembrane regions (helical) follow at residues 15–35 (VVTLAVAAFIFNTTEFVPVGL), 50–70 (VGIMLTIYAWVVALMSLPFML), 81–101 (LICLFVVFIASHVLSFLSWSF), 103–123 (VLVISRIGVAFAHAIFWSITA), 136–156 (AQALSLIATGTALAMVLGLPL), 170–190 (FFAIGIGALITLLCLIKLLPL), 209–229 (PALMSIYLLTVVVVTAHYTAY), 246–266 (FATALLLLLGGAGIIGSVIFG), 275–295 (ALVSTAIALLLVCLALLLPAA), 299–319 (IHLGVLSIFWGIAMMLIGLGM), 333–353 (VAMALFSGIFNIGIGAGALVG), and 364–384 (MIGYVGAVPAFAALIWSIIIF).

This sequence belongs to the major facilitator superfamily. SotB (TC 2.A.1.2) family.

The protein localises to the cell inner membrane. Its function is as follows. Involved in the efflux of sugars. The physiological role may be the reduction of the intracellular concentration of toxic sugars or sugar metabolites. The sequence is that of Probable sugar efflux transporter from Shigella boydii serotype 18 (strain CDC 3083-94 / BS512).